The sequence spans 463 residues: tRNA modification GTPase MnmE (463 aa).

3 residues coordinate (6S)-5-formyl-5,6,7,8-tetrahydrofolate: Arg27, Glu92, and Lys131. The TrmE-type G domain maps to 234–386 (GIKLAIVGKP…LEDHLLKIYS (153 aa)). Residue Asn244 participates in K(+) binding. GTP contacts are provided by residues 244 to 249 (NVGKSS), 263 to 269 (TNVAGTT), and 288 to 291 (DTAG). Ser248 serves as a coordination point for Mg(2+). K(+) is bound by residues Thr263, Val265, and Thr268. Thr269 is a Mg(2+) binding site. Lys463 contributes to the (6S)-5-formyl-5,6,7,8-tetrahydrofolate binding site.

It belongs to the TRAFAC class TrmE-Era-EngA-EngB-Septin-like GTPase superfamily. TrmE GTPase family. As to quaternary structure, homodimer. Heterotetramer of two MnmE and two MnmG subunits. K(+) is required as a cofactor.

It localises to the cytoplasm. Exhibits a very high intrinsic GTPase hydrolysis rate. Involved in the addition of a carboxymethylaminomethyl (cmnm) group at the wobble position (U34) of certain tRNAs, forming tRNA-cmnm(5)s(2)U34. The polypeptide is tRNA modification GTPase MnmE (Mycoplasmopsis synoviae (strain 53) (Mycoplasma synoviae)).